Here is a 238-residue protein sequence, read N- to C-terminus: MYAPGGAGLPGGRRRRSPGGSALPKQPERSLASALPGALSITALCTALAEPAWLHIHGGTCSRQELGVSDVLGYVHPDLLKDFCMNPQTVLLLRVIAAFCFLGILCSLSAFLLDVFGPKHPALKITRRYAFAHILTVLQCATVIGFSYWASELILAQQQQHKKYHGSQVYVTFAVSFYLVAGAGGASILATAANLLRHYPTEEEEQALELLSEMEENEPYPAEYEVINQFQPPPAYTP.

Position 1 is an N-acetylmethionine (Met-1). A compositionally biased stretch (gly residues) spans 1 to 11 (MYAPGGAGLPG). The segment at 1–27 (MYAPGGAGLPGGRRRRSPGGSALPKQP) is disordered. Position 17 is a phosphoserine (Ser-17). 3 helical membrane passes run 96–116 (IAAF…LDVF), 130–150 (AFAH…SYWA), and 169–189 (VYVT…ASIL).

This sequence belongs to the TMEM127 family. Widely expressed.

It localises to the cell membrane. The protein resides in the cytoplasm. In terms of biological role, controls cell proliferation acting as a negative regulator of TOR signaling pathway mediated by mTORC1. May act as a tumor suppressor. The sequence is that of Transmembrane protein 127 (TMEM127) from Homo sapiens (Human).